Here is a 466-residue protein sequence, read N- to C-terminus: Cysteine--tRNA ligase (466 aa).

Zn(2+) is bound at residue cysteine 27. Positions 29 to 39 (PTVYNYFHIGN) match the 'HIGH' region motif. 3 residues coordinate Zn(2+): cysteine 207, histidine 232, and glutamate 236. The short motif at 264-268 (KMSKS) is the 'KMSKS' region element. Lysine 267 serves as a coordination point for ATP.

It belongs to the class-I aminoacyl-tRNA synthetase family. Monomer. Zn(2+) is required as a cofactor.

It localises to the cytoplasm. The catalysed reaction is tRNA(Cys) + L-cysteine + ATP = L-cysteinyl-tRNA(Cys) + AMP + diphosphate. This is Cysteine--tRNA ligase from Clostridium novyi (strain NT).